Reading from the N-terminus, the 179-residue chain is Adenine phosphoribosyltransferase (179 aa).

Belongs to the purine/pyrimidine phosphoribosyltransferase family. In terms of assembly, homodimer.

It is found in the cytoplasm. It carries out the reaction AMP + diphosphate = 5-phospho-alpha-D-ribose 1-diphosphate + adenine. The protein operates within purine metabolism; AMP biosynthesis via salvage pathway; AMP from adenine: step 1/1. Its function is as follows. Catalyzes a salvage reaction resulting in the formation of AMP, that is energically less costly than de novo synthesis. This Gluconobacter oxydans (strain 621H) (Gluconobacter suboxydans) protein is Adenine phosphoribosyltransferase.